The following is a 105-amino-acid chain: Small ribosomal subunit protein uS10 (105 aa).

This sequence belongs to the universal ribosomal protein uS10 family. In terms of assembly, part of the 30S ribosomal subunit.

Involved in the binding of tRNA to the ribosomes. The sequence is that of Small ribosomal subunit protein uS10 from Rickettsia typhi (strain ATCC VR-144 / Wilmington).